Here is a 126-residue protein sequence, read N- to C-terminus: UPF0231 protein VC0395_A0134/VC395_0622 (126 aa).

It belongs to the UPF0231 family.

This chain is UPF0231 protein VC0395_A0134/VC395_0622, found in Vibrio cholerae serotype O1 (strain ATCC 39541 / Classical Ogawa 395 / O395).